A 331-amino-acid chain; its full sequence is MAEGGGPEPGEQERRSSGPRPPSARDLQLALAELYEDEVKCKSSKSNRPKATVFKSPRTPPQRFYSSEHEYSGLNIVRPSTGKIVNELFKEAREHGAVPLNEATRASGDDKSKSFTGGGYRLGSSFCKRSEYIYGENQLQDVQILLKLWSNGFSLDDGELRPYNEPTNAQFLESVKRGEIPLELQRLVHGGQVNLDMEDHQDQEYIKPRLRFKAFSGEGQKLGSLTPEIVSTPSSPEEEDKSILNAVVLIDDSVPTTKIQIRLADGSRLIQRFNSTHRILDVRNFIVQSRPEFAALDFILVTSFPNKELTDESLTLLEADILNTVLLQQLK.

Disordered stretches follow at residues 1–26 (MAEGGGPEPGEQERRSSGPRPPSARD) and 40–65 (KCKSSKSNRPKATVFKSPRTPPQRFY). Ala2 carries the post-translational modification N-acetylalanine. Ser56 is modified (phosphoserine). A Phosphothreonine modification is found at Thr59. A Phosphoserine modification is found at Ser66. The 66-residue stretch at 141–206 (DVQILLKLWS…MEDHQDQEYI (66 aa)) folds into the SEP domain. Residues Ser231, Ser234, and Ser235 each carry the phosphoserine modification. A UBX domain is found at 252–329 (DSVPTTKIQI…DILNTVLLQQ (78 aa)).

It belongs to the NSFL1C family. As to quaternary structure, interacts with VCP. Does not bind ubiquitin.

It is found in the nucleus. The protein localises to the cytoplasm. It localises to the cytosol. The protein resides in the endoplasmic reticulum. Its subcellular location is the golgi apparatus. It is found in the cytoskeleton. The protein localises to the microtubule organizing center. It localises to the centrosome. Functionally, adapter protein required for Golgi and endoplasmic reticulum biogenesis. Involved in Golgi and endoplasmic reticulum maintenance during interphase and in their reassembly at the end of mitosis. The complex formed with VCP has membrane fusion activity; membrane fusion activity requires USO1-GOLGA2 tethering and BET1L. VCPIP1 is also required, but not its deubiquitinating activity. Together with NSFL1C/p47, regulates the centrosomal levels of kinase AURKA/Aurora A during mitotic progression by promoting AURKA removal from centrosomes in prophase. Also, regulates spindle orientation during mitosis. This is UBX domain-containing protein 2B (UBXN2B) from Homo sapiens (Human).